Reading from the N-terminus, the 63-residue chain is Laccase-C1 (63 aa).

It belongs to the multicopper oxidase family. In terms of assembly, monomer. Cu cation is required as a cofactor. In terms of processing, glycosylated; contains 16% carbohydrates.

It localises to the secreted. The enzyme catalyses 4 hydroquinone + O2 = 4 benzosemiquinone + 2 H2O. Inhibited by sodium azide. Its function is as follows. Lignin degradation and detoxification of lignin-derived products. Oxidation of a broad range of substrates including mono-, di- and polyphenols, aromatic amines and methoxy-substituted phenols accompanied by reduction of oxygen to water. This is Laccase-C1 from Cerrena unicolor (Canker rot fungus).